The chain runs to 501 residues: Glucans biosynthesis protein G (501 aa).

The N-terminal stretch at 1-24 is a signal peptide; the sequence is MNRRQVLAALAAIPLLPEAFPANA.

This sequence belongs to the OpgD/OpgG family.

It localises to the periplasm. It functions in the pathway glycan metabolism; osmoregulated periplasmic glucan (OPG) biosynthesis. Involved in the biosynthesis of osmoregulated periplasmic glucans (OPGs). The protein is Glucans biosynthesis protein G of Rhodopseudomonas palustris (strain BisA53).